Reading from the N-terminus, the 200-residue chain is Glycerol-3-phosphate acyltransferase (200 aa).

Helical transmembrane passes span 1 to 21 (MLLS…MPNG), 53 to 73 (GPAL…VLLA), 81 to 101 (WVQV…VWLG), 114 to 134 (MFLG…MAVI), and 139 to 159 (IVSL…LTSG).

Belongs to the PlsY family. In terms of assembly, probably interacts with PlsX.

The protein localises to the cell inner membrane. It catalyses the reaction an acyl phosphate + sn-glycerol 3-phosphate = a 1-acyl-sn-glycero-3-phosphate + phosphate. It functions in the pathway lipid metabolism; phospholipid metabolism. Its function is as follows. Catalyzes the transfer of an acyl group from acyl-phosphate (acyl-PO(4)) to glycerol-3-phosphate (G3P) to form lysophosphatidic acid (LPA). This enzyme utilizes acyl-phosphate as fatty acyl donor, but not acyl-CoA or acyl-ACP. This chain is Glycerol-3-phosphate acyltransferase, found in Synechococcus sp. (strain CC9902).